Reading from the N-terminus, the 175-residue chain is ATP-dependent protease subunit HslV (175 aa).

The active site involves T2. A156, C159, and T162 together coordinate Na(+).

The protein belongs to the peptidase T1B family. HslV subfamily. As to quaternary structure, a double ring-shaped homohexamer of HslV is capped on each side by a ring-shaped HslU homohexamer. The assembly of the HslU/HslV complex is dependent on binding of ATP.

The protein localises to the cytoplasm. The enzyme catalyses ATP-dependent cleavage of peptide bonds with broad specificity.. With respect to regulation, allosterically activated by HslU binding. Functionally, protease subunit of a proteasome-like degradation complex believed to be a general protein degrading machinery. The polypeptide is ATP-dependent protease subunit HslV (Rhizobium etli (strain CIAT 652)).